We begin with the raw amino-acid sequence, 879 residues long: Alanine--tRNA ligase (879 aa).

Positions 566, 570, 668, and 672 each coordinate Zn(2+).

Belongs to the class-II aminoacyl-tRNA synthetase family. The cofactor is Zn(2+).

The protein resides in the cytoplasm. The enzyme catalyses tRNA(Ala) + L-alanine + ATP = L-alanyl-tRNA(Ala) + AMP + diphosphate. In terms of biological role, catalyzes the attachment of alanine to tRNA(Ala) in a two-step reaction: alanine is first activated by ATP to form Ala-AMP and then transferred to the acceptor end of tRNA(Ala). Also edits incorrectly charged Ser-tRNA(Ala) and Gly-tRNA(Ala) via its editing domain. This is Alanine--tRNA ligase from Halalkalibacterium halodurans (strain ATCC BAA-125 / DSM 18197 / FERM 7344 / JCM 9153 / C-125) (Bacillus halodurans).